Here is a 161-residue protein sequence, read N- to C-terminus: Photosystem II extrinsic protein V (161 aa).

The signal sequence occupies residues 1–25; it reads MKKFFISVVFIVLLTFTTFINSATA. Positions 61, 64, 65, and 116 each coordinate heme c.

This sequence belongs to the cytochrome c family. PsbV subfamily. In terms of assembly, PSII is composed of 1 copy each of membrane proteins PsbA, PsbB, PsbC, PsbD, PsbE, PsbF, PsbH, PsbI, PsbJ, PsbK, PsbL, PsbM, PsbT, PsbX, PsbY, PsbZ, Psb30/Ycf12, peripheral proteins PsbO, CyanoQ (PsbQ), PsbU, PsbV and a large number of cofactors. It forms dimeric complexes. Heme c serves as cofactor.

Its subcellular location is the cellular thylakoid membrane. In terms of biological role, one of the extrinsic, lumenal subunits of photosystem II (PSII). PSII is a light-driven water plastoquinone oxidoreductase, using light energy to abstract electrons from H(2)O, generating a proton gradient subsequently used for ATP formation. The extrinsic proteins stabilize the structure of photosystem II oxygen-evolving complex (OEC), the ion environment of oxygen evolution and protect the OEC against heat-induced inactivation. Low-potential cytochrome c that plays a role in the OEC of PSII. In Trichodesmium erythraeum (strain IMS101), this protein is Photosystem II extrinsic protein V.